The primary structure comprises 384 residues: tRNA-specific 2-thiouridylase MnmA (384 aa).

The segment at 1 to 26 (MDEGIRASGGIRACQTGKQKQGRKRP) is disordered. Residues 36-43 (GMSGGVDS) and methionine 62 contribute to the ATP site. The interval 122–124 (NPD) is interaction with target base in tRNA. The Nucleophile role is filled by cysteine 127. Cysteine 127 and cysteine 223 are joined by a disulfide. Glycine 151 contributes to the ATP binding site. The interval 173-175 (KDQ) is interaction with tRNA. Cysteine 223 serves as the catalytic Cysteine persulfide intermediate. Residues 334–335 (RY) are interaction with tRNA.

It belongs to the MnmA/TRMU family.

The protein localises to the cytoplasm. It carries out the reaction S-sulfanyl-L-cysteinyl-[protein] + uridine(34) in tRNA + AH2 + ATP = 2-thiouridine(34) in tRNA + L-cysteinyl-[protein] + A + AMP + diphosphate + H(+). Its function is as follows. Catalyzes the 2-thiolation of uridine at the wobble position (U34) of tRNA, leading to the formation of s(2)U34. The polypeptide is tRNA-specific 2-thiouridylase MnmA (Chromobacterium violaceum (strain ATCC 12472 / DSM 30191 / JCM 1249 / CCUG 213 / NBRC 12614 / NCIMB 9131 / NCTC 9757 / MK)).